A 468-amino-acid chain; its full sequence is Tyrosine phenol-lyase (468 aa).

Lysine 260 is modified (N6-(pyridoxal phosphate)lysine).

It belongs to the beta-eliminating lyase family. In terms of assembly, homotetramer. Requires pyridoxal 5'-phosphate as cofactor.

The enzyme catalyses L-tyrosine + H2O = phenol + pyruvate + NH4(+). This Lacrimispora saccharolytica (strain ATCC 35040 / DSM 2544 / NRCC 2533 / WM1) (Clostridium saccharolyticum) protein is Tyrosine phenol-lyase.